The sequence spans 94 residues: MTDAVGSIDTPDAQDEVPESKKTRKGGKRAKKGPLKRLATFYRQIIAELRKVVWPTRNQLTSYTTVVIFFVAIMIRLVTVIDYGLNHAAKYVFG.

Residues 1-32 (MTDAVGSIDTPDAQDEVPESKKTRKGGKRAKK) form a disordered region. A compositionally biased stretch (basic residues) spans 22-32 (KTRKGGKRAKK). A helical transmembrane segment spans residues 59-81 (QLTSYTTVVIFFVAIMIRLVTVI).

The protein belongs to the SecE/SEC61-gamma family. As to quaternary structure, component of the Sec protein translocase complex. Heterotrimer consisting of SecY, SecE and SecG subunits. The heterotrimers can form oligomers, although 1 heterotrimer is thought to be able to translocate proteins. Interacts with the ribosome. Interacts with SecDF, and other proteins may be involved. Interacts with SecA.

The protein resides in the cell membrane. Essential subunit of the Sec protein translocation channel SecYEG. Clamps together the 2 halves of SecY. May contact the channel plug during translocation. This is Protein translocase subunit SecE from Streptomyces galbus.